The primary structure comprises 249 residues: Sesquipedalian-1 (249 aa).

The PH domain occupies 17–113 (PVDNAGFLYK…WVKALSRASF (97 aa)). Disordered stretches follow at residues 134–159 (GGMA…LAPV) and 194–219 (EATF…HGPL). Pro residues predominate over residues 140 to 152 (QPQPQSLPLPPSL). The residue at position 213 (Ser213) is a Phosphoserine. The F&amp;H signature appears at 223-235 (PFARLHECYGQEI).

Belongs to the sesquipedalian family. In terms of assembly, forms homodimers and heterodimers with PHETA2. Interacts with OCRL and INPP5B. Interaction with OCRL may be important for endosomal morphology and function.

The protein resides in the early endosome. The protein localises to the recycling endosome. It localises to the golgi apparatus. It is found in the trans-Golgi network. Its subcellular location is the cytoplasmic vesicle. The protein resides in the clathrin-coated vesicle. Functionally, plays a role in endocytic trafficking. Required for receptor recycling from endosomes, both to the trans-Golgi network and the plasma membrane. The chain is Sesquipedalian-1 from Homo sapiens (Human).